A 349-amino-acid polypeptide reads, in one-letter code: N-acetyl-gamma-glutamyl-phosphate reductase (349 aa).

Residue C149 is part of the active site.

It belongs to the NAGSA dehydrogenase family. Type 1 subfamily.

It localises to the cytoplasm. The enzyme catalyses N-acetyl-L-glutamate 5-semialdehyde + phosphate + NADP(+) = N-acetyl-L-glutamyl 5-phosphate + NADPH + H(+). Its pathway is amino-acid biosynthesis; L-arginine biosynthesis; N(2)-acetyl-L-ornithine from L-glutamate: step 3/4. In terms of biological role, catalyzes the NADPH-dependent reduction of N-acetyl-5-glutamyl phosphate to yield N-acetyl-L-glutamate 5-semialdehyde. This Acinetobacter baumannii (strain ACICU) protein is N-acetyl-gamma-glutamyl-phosphate reductase.